Consider the following 553-residue polypeptide: Glycerol-3-phosphate dehydrogenase (553 aa).

Residue 13-41 (DLIVIGGGINGVGTARDGALRGLKTLLIE) participates in FAD binding.

It belongs to the FAD-dependent glycerol-3-phosphate dehydrogenase family. It depends on FAD as a cofactor.

It is found in the cytoplasm. The catalysed reaction is a quinone + sn-glycerol 3-phosphate = dihydroxyacetone phosphate + a quinol. This Synechocystis sp. (strain ATCC 27184 / PCC 6803 / Kazusa) protein is Glycerol-3-phosphate dehydrogenase (glpD).